A 239-amino-acid chain; its full sequence is Small ribosomal subunit protein uS2 (239 aa).

This sequence belongs to the universal ribosomal protein uS2 family.

This chain is Small ribosomal subunit protein uS2, found in Parasynechococcus marenigrum (strain WH8102).